The following is a 365-amino-acid chain: Histidinol-phosphate aminotransferase (365 aa).

K220 is modified (N6-(pyridoxal phosphate)lysine).

It belongs to the class-II pyridoxal-phosphate-dependent aminotransferase family. Histidinol-phosphate aminotransferase subfamily. As to quaternary structure, homodimer. Pyridoxal 5'-phosphate serves as cofactor.

The catalysed reaction is L-histidinol phosphate + 2-oxoglutarate = 3-(imidazol-4-yl)-2-oxopropyl phosphate + L-glutamate. The protein operates within amino-acid biosynthesis; L-histidine biosynthesis; L-histidine from 5-phospho-alpha-D-ribose 1-diphosphate: step 7/9. In Xylella fastidiosa (strain 9a5c), this protein is Histidinol-phosphate aminotransferase.